Consider the following 553-residue polypeptide: uncharacterized protein (553 aa).

Residues 1-28 (MRYARHASRYSLFTLAVSAALLPGAGWA) form the signal peptide.

This is an uncharacterized protein from Pseudomonas aeruginosa (strain ATCC 15692 / DSM 22644 / CIP 104116 / JCM 14847 / LMG 12228 / 1C / PRS 101 / PAO1).